The following is a 164-amino-acid chain: Heat shock protein beta-6 (164 aa).

The tract at residues methionine 1–glycine 72 is involved in stabilization of the HSPB1:HSBP6 heterodimer. A Phosphoserine modification is found at serine 16. The sHSP domain maps to arginine 56–alanine 163. The residue at position 66 (glutamine 66) is a Deamidated glutamine. Serine 157 carries the phosphoserine modification.

Belongs to the small heat shock protein (HSP20) family. Homodimer. Small heat shock proteins form high molecular mass oligomers containing variable number of monomers; these oligomers display a very flexible quaternary structure easily exchanging their subunits. Heterooligomer with HSPB1; formed through oligomerization of HSPB1:HSBP6 dimers; subunit exchange leads to formation of at least two different heterooligomeric complexes, differing in variable quantities of HSPB1 and HSPB6 homodimers in addition to HSPB1:HSPB6 heterodimers. Heterooligomer with CRYAB; large heterooligomers consist of CRYAB homodimers and HSPB5:HSPB6 heterodimers but lacking HSPB6 homodimers. Interacts with BAG3. Interacts (phosphorylated) with YWHAZ. Interacts with PDE4A and PDE4D; required for maintenance of the non-phosphorylated state of HSPB6 under basal conditions. Interacts with KDR. Interacts with PRKD1. In terms of processing, phosphorylated at Ser-16 by PKA and probably PKD1K; required to protect cardiomyocytes from apoptosis.

The protein localises to the cytoplasm. It is found in the nucleus. The protein resides in the secreted. Small heat shock protein which functions as a molecular chaperone probably maintaining denatured proteins in a folding-competent state. Seems to have versatile functions in various biological processes. Plays a role in regulating muscle function such as smooth muscle vasorelaxation and cardiac myocyte contractility. May regulate myocardial angiogenesis implicating KDR. Overexpression mediates cardioprotection and angiogenesis after induced damage. Stabilizes monomeric YWHAZ thereby supporting YWHAZ chaperone-like activity. This Bos taurus (Bovine) protein is Heat shock protein beta-6 (HSPB6).